The primary structure comprises 285 residues: Protoheme IX farnesyltransferase (285 aa).

The next 9 membrane-spanning stretches (helical) occupy residues 13-33 (LGKLGVVSLLDLAAVAGAFLA), 40-60 (LLPIIPMFIGGTLASMGAMII), 89-109 (EAIIVGSLLAILGTALGFIDN), 110-130 (ILTAFFIALGVVIYIFVYTIL), 137-157 (LNIVIGGFAGSAAAWAGYTSL), 165-185 (GFLLGFLIFMWTPGHFWSLAL), 194-214 (AHYPMLPAVVGITTSARAIAI), 218-238 (LMIPIVLLLGYYINLIALIAF), and 265-285 (FIFSNIYLMLILLIMIIVKLI).

This sequence belongs to the UbiA prenyltransferase family. Protoheme IX farnesyltransferase subfamily.

Its subcellular location is the cell membrane. The catalysed reaction is heme b + (2E,6E)-farnesyl diphosphate + H2O = Fe(II)-heme o + diphosphate. Its pathway is porphyrin-containing compound metabolism; heme O biosynthesis; heme O from protoheme: step 1/1. Functionally, converts heme B (protoheme IX) to heme O by substitution of the vinyl group on carbon 2 of heme B porphyrin ring with a hydroxyethyl farnesyl side group. This is Protoheme IX farnesyltransferase from Saccharolobus islandicus (strain Y.G.57.14 / Yellowstone #1) (Sulfolobus islandicus).